Consider the following 191-residue polypeptide: Thiol:disulfide interchange protein TxlA (191 aa).

A helical membrane pass occupies residues 14-30 (ILVIAAALVLTILVVLG). The 122-residue stretch at 27 to 148 (VVLGSRQPSA…LAANLDALVE (122 aa)) folds into the Thioredoxin domain. Cys-69 and Cys-72 are oxidised to a cystine. Polar residues predominate over residues 165–185 (SADLQPSRSSQTDPRSHSGQV). Residues 165–191 (SADLQPSRSSQTDPRSHSGQVQDGVLD) are disordered.

It belongs to the thioredoxin family.

The protein resides in the cell membrane. Its function is as follows. Required for disulfide bond formation in some proteins. Acts by transferring its disulfide bond to other proteins and is reduced in the process. The chain is Thiol:disulfide interchange protein TxlA (txlA) from Synechococcus elongatus (strain ATCC 33912 / PCC 7942 / FACHB-805) (Anacystis nidulans R2).